The primary structure comprises 284 residues: Bifunctional protein FolD (284 aa).

Residues 166–168 (GAS) and I232 each bind NADP(+).

It belongs to the tetrahydrofolate dehydrogenase/cyclohydrolase family. As to quaternary structure, homodimer.

The catalysed reaction is (6R)-5,10-methylene-5,6,7,8-tetrahydrofolate + NADP(+) = (6R)-5,10-methenyltetrahydrofolate + NADPH. It catalyses the reaction (6R)-5,10-methenyltetrahydrofolate + H2O = (6R)-10-formyltetrahydrofolate + H(+). The protein operates within one-carbon metabolism; tetrahydrofolate interconversion. Catalyzes the oxidation of 5,10-methylenetetrahydrofolate to 5,10-methenyltetrahydrofolate and then the hydrolysis of 5,10-methenyltetrahydrofolate to 10-formyltetrahydrofolate. In Shewanella oneidensis (strain ATCC 700550 / JCM 31522 / CIP 106686 / LMG 19005 / NCIMB 14063 / MR-1), this protein is Bifunctional protein FolD.